The sequence spans 425 residues: Serine--tRNA ligase (425 aa).

228–230 contacts L-serine; it reads TAE. Residue 259–261 coordinates ATP; the sequence is RSE. Glutamate 282 contributes to the L-serine binding site. 346-349 provides a ligand contact to ATP; the sequence is EIAS. Serine 382 is a binding site for L-serine.

This sequence belongs to the class-II aminoacyl-tRNA synthetase family. Type-1 seryl-tRNA synthetase subfamily. As to quaternary structure, homodimer. The tRNA molecule binds across the dimer.

It localises to the cytoplasm. The enzyme catalyses tRNA(Ser) + L-serine + ATP = L-seryl-tRNA(Ser) + AMP + diphosphate + H(+). The catalysed reaction is tRNA(Sec) + L-serine + ATP = L-seryl-tRNA(Sec) + AMP + diphosphate + H(+). The protein operates within aminoacyl-tRNA biosynthesis; selenocysteinyl-tRNA(Sec) biosynthesis; L-seryl-tRNA(Sec) from L-serine and tRNA(Sec): step 1/1. Its function is as follows. Catalyzes the attachment of serine to tRNA(Ser). Is also able to aminoacylate tRNA(Sec) with serine, to form the misacylated tRNA L-seryl-tRNA(Sec), which will be further converted into selenocysteinyl-tRNA(Sec). In Rickettsia felis (strain ATCC VR-1525 / URRWXCal2) (Rickettsia azadi), this protein is Serine--tRNA ligase.